We begin with the raw amino-acid sequence, 104 residues long: Circadian clock oscillator protein KaiB (104 aa).

This sequence belongs to the KaiB family. In terms of assembly, the KaiABC complex composition changes during the circadian cycle to control KaiC phosphorylation. Complexes KaiC(6), KaiA(2-4):KaiC(6), KaiB(6):KaiC(6) and KaiC(6):KaiB(6):KaiA(12) are among the most important forms, many form cooperatively. Undergoes a major conformational rearrangment; in the free state forms homotetramers as a dimer of dimers. When bound to the CI domain of KaiC switches to a monomeric thioredoxin-fold (KaiB(fs)). KaiB(fs) binds CikA, leading it to dephosphorylate phospho-RpaA.

Its function is as follows. Key component of the KaiABC oscillator complex, which constitutes the main circadian regulator in cyanobacteria. Complex composition changes during the circadian cycle to control KaiC phosphorylation. KaiA stimulates KaiC autophosphorylation, while KaiB sequesters KaiA, leading to KaiC autodephosphorylation. Phospho-Ser-431 KaiC accumulation triggers binding of KaiB to form the KaiB(6):KaiC(6) complex, leading to changes in output regulators CikA and SasA. KaiB switches to a thioredoxin-like fold (KaiB(fs)) when bound to KaiC. KaiB(6):KaiC(6) formation exposes a site for KaiA binding that sequesters KaiA from KaiC, making the KaiC(6):KaiB(6):KaiA(12) complex that results in KaiC autodephosphorylation. Functionally, a metamorphic protein which reversibly switches between an inactive tetrameric fold and a rare, thioredoxin-like monomeric fold (KaiB(fs)). KaiB(fs) binds phospho-KaiC, KaiA and CikA. KaiA and CikA compete for binding to KaiB(fs), and KaiB(fs) and SasA compete for binding to KaiC, thus the clock oscillator and output signal pathway are tightly coupled. This Picosynechococcus sp. (strain ATCC 27264 / PCC 7002 / PR-6) (Agmenellum quadruplicatum) protein is Circadian clock oscillator protein KaiB.